We begin with the raw amino-acid sequence, 125 residues long: Small ribosomal subunit protein uS13 (125 aa).

The tract at residues 92-125 is disordered; it reads RRHLPVHGQRTKTNARTRKGPKKTVAGKKKAGKK.

The protein belongs to the universal ribosomal protein uS13 family. As to quaternary structure, part of the 30S ribosomal subunit. Forms a loose heterodimer with protein S19. Forms two bridges to the 50S subunit in the 70S ribosome.

In terms of biological role, located at the top of the head of the 30S subunit, it contacts several helices of the 16S rRNA. In the 70S ribosome it contacts the 23S rRNA (bridge B1a) and protein L5 of the 50S subunit (bridge B1b), connecting the 2 subunits; these bridges are implicated in subunit movement. Contacts the tRNAs in the A and P-sites. The polypeptide is Small ribosomal subunit protein uS13 (Saccharopolyspora erythraea (strain ATCC 11635 / DSM 40517 / JCM 4748 / NBRC 13426 / NCIMB 8594 / NRRL 2338)).